A 553-amino-acid chain; its full sequence is Putative transport protein AHA_3492 (553 aa).

The next 5 membrane-spanning stretches (helical) occupy residues I4–W24, V29–L49, F65–S85, G95–F115, and M158–I178. RCK C-terminal domains are found at residues A191–E276 and E279–N361. The next 6 membrane-spanning stretches (helical) occupy residues M371–L391, A403–F425, I439–I459, A465–A485, Y493–A513, and L533–A553.

This sequence belongs to the AAE transporter (TC 2.A.81) family. YidE subfamily.

Its subcellular location is the cell membrane. This Aeromonas hydrophila subsp. hydrophila (strain ATCC 7966 / DSM 30187 / BCRC 13018 / CCUG 14551 / JCM 1027 / KCTC 2358 / NCIMB 9240 / NCTC 8049) protein is Putative transport protein AHA_3492.